A 587-amino-acid polypeptide reads, in one-letter code: Arginine--tRNA ligase (587 aa).

The 'HIGH' region motif lies at 127-137 (ANPTGPLHVGH).

It belongs to the class-I aminoacyl-tRNA synthetase family. In terms of assembly, monomer.

Its subcellular location is the cytoplasm. The catalysed reaction is tRNA(Arg) + L-arginine + ATP = L-arginyl-tRNA(Arg) + AMP + diphosphate. In Dechloromonas aromatica (strain RCB), this protein is Arginine--tRNA ligase.